A 253-amino-acid polypeptide reads, in one-letter code: Indole-3-glycerol phosphate synthase (253 aa).

The protein belongs to the TrpC family.

It carries out the reaction 1-(2-carboxyphenylamino)-1-deoxy-D-ribulose 5-phosphate + H(+) = (1S,2R)-1-C-(indol-3-yl)glycerol 3-phosphate + CO2 + H2O. It participates in amino-acid biosynthesis; L-tryptophan biosynthesis; L-tryptophan from chorismate: step 4/5. The sequence is that of Indole-3-glycerol phosphate synthase from Petrotoga mobilis (strain DSM 10674 / SJ95).